A 242-amino-acid polypeptide reads, in one-letter code: tRNA (guanine-N(1)-)-methyltransferase (242 aa).

S-adenosyl-L-methionine contacts are provided by residues glycine 112 and 131–136; that span reads LGDFIL.

This sequence belongs to the RNA methyltransferase TrmD family. Homodimer.

Its subcellular location is the cytoplasm. It carries out the reaction guanosine(37) in tRNA + S-adenosyl-L-methionine = N(1)-methylguanosine(37) in tRNA + S-adenosyl-L-homocysteine + H(+). Specifically methylates guanosine-37 in various tRNAs. The sequence is that of tRNA (guanine-N(1)-)-methyltransferase from Crocosphaera subtropica (strain ATCC 51142 / BH68) (Cyanothece sp. (strain ATCC 51142)).